Consider the following 316-residue polypeptide: Acetyl-coenzyme A carboxylase carboxyl transferase subunit alpha (316 aa).

Residues 39 to 293 (KLEEKNAQLT…KKHLQANLTN (255 aa)) form the CoA carboxyltransferase C-terminal domain.

It belongs to the AccA family. In terms of assembly, acetyl-CoA carboxylase is a heterohexamer composed of biotin carboxyl carrier protein (AccB), biotin carboxylase (AccC) and two subunits each of ACCase subunit alpha (AccA) and ACCase subunit beta (AccD).

It localises to the cytoplasm. The enzyme catalyses N(6)-carboxybiotinyl-L-lysyl-[protein] + acetyl-CoA = N(6)-biotinyl-L-lysyl-[protein] + malonyl-CoA. The protein operates within lipid metabolism; malonyl-CoA biosynthesis; malonyl-CoA from acetyl-CoA: step 1/1. Functionally, component of the acetyl coenzyme A carboxylase (ACC) complex. First, biotin carboxylase catalyzes the carboxylation of biotin on its carrier protein (BCCP) and then the CO(2) group is transferred by the carboxyltransferase to acetyl-CoA to form malonyl-CoA. This chain is Acetyl-coenzyme A carboxylase carboxyl transferase subunit alpha, found in Coxiella burnetii (strain RSA 331 / Henzerling II).